A 370-amino-acid polypeptide reads, in one-letter code: Germination protease (370 aa).

The propeptide occupies methionine 1–aspartate 15.

The protein belongs to the peptidase A25 family. In terms of assembly, homotetramer. In terms of processing, autoproteolytically processed. The inactive tetrameric zymogen termed p46 autoprocesses to a smaller form termed p41, which is active only during spore germination.

The catalysed reaction is Endopeptidase action with P4 Glu or Asp, P1 preferably Glu &gt; Asp, P1' hydrophobic and P2' Ala.. Initiates the rapid degradation of small, acid-soluble proteins during spore germination. The sequence is that of Germination protease (gpr) from Priestia megaterium (strain ATCC 12872 / QMB1551) (Bacillus megaterium).